The following is a 396-amino-acid chain: Stearoyl-[acyl-carrier-protein] 9-desaturase 2, chloroplastic (396 aa).

A chloroplast-targeting transit peptide spans 1-32; it reads MALRPNDVTLRLTPPLAAAARRNRRAAAGGVR. Positions 138, 176, 179, 229, 262, and 265 each coordinate Fe cation.

Belongs to the fatty acid desaturase type 2 family. As to quaternary structure, homodimer. Fe(2+) serves as cofactor.

The protein resides in the plastid. It localises to the chloroplast. The enzyme catalyses octadecanoyl-[ACP] + 2 reduced [2Fe-2S]-[ferredoxin] + O2 + 2 H(+) = (9Z)-octadecenoyl-[ACP] + 2 oxidized [2Fe-2S]-[ferredoxin] + 2 H2O. Its pathway is lipid metabolism; fatty acid metabolism. In terms of biological role, converts stearoyl-ACP to oleoyl-ACP by introduction of a cis double bond between carbons 9 and 10 of the acyl chain. Required for the repression of the salicylic acid (SA) signaling pathway. This chain is Stearoyl-[acyl-carrier-protein] 9-desaturase 2, chloroplastic (SSI2), found in Oryza sativa subsp. indica (Rice).